Reading from the N-terminus, the 307-residue chain is tRNA pseudouridine synthase B (307 aa).

The Nucleophile role is filled by Asp38.

This sequence belongs to the pseudouridine synthase TruB family. Type 1 subfamily.

The enzyme catalyses uridine(55) in tRNA = pseudouridine(55) in tRNA. Its function is as follows. Responsible for synthesis of pseudouridine from uracil-55 in the psi GC loop of transfer RNAs. The protein is tRNA pseudouridine synthase B of Lachnoclostridium phytofermentans (strain ATCC 700394 / DSM 18823 / ISDg) (Clostridium phytofermentans).